The sequence spans 1033 residues: Isoleucine--tRNA ligase (1033 aa).

The short motif at 47–57 (PTANGLPHVGH) is the 'HIGH' region element. Positions 590 to 594 (KMSKS) match the 'KMSKS' region motif. Lys593 lines the ATP pocket.

Belongs to the class-I aminoacyl-tRNA synthetase family. IleS type 2 subfamily. As to quaternary structure, monomer. Requires Zn(2+) as cofactor.

It localises to the cytoplasm. The catalysed reaction is tRNA(Ile) + L-isoleucine + ATP = L-isoleucyl-tRNA(Ile) + AMP + diphosphate. Its function is as follows. Catalyzes the attachment of isoleucine to tRNA(Ile). As IleRS can inadvertently accommodate and process structurally similar amino acids such as valine, to avoid such errors it has two additional distinct tRNA(Ile)-dependent editing activities. One activity is designated as 'pretransfer' editing and involves the hydrolysis of activated Val-AMP. The other activity is designated 'posttransfer' editing and involves deacylation of mischarged Val-tRNA(Ile). The polypeptide is Isoleucine--tRNA ligase (Bacillus thuringiensis (strain Al Hakam)).